A 334-amino-acid chain; its full sequence is Protein POLAR-like 1 (334 aa).

Over residues 53–63 (IRTSSEDDHHR) the composition is skewed to basic and acidic residues. A disordered region spans residues 53–74 (IRTSSEDDHHRVGQFSDSPPPT). A coiled-coil region spans residues 273–300 (ETRQQEEIKELEIALDDAKQRLHLKETE).

The protein resides in the cytoplasm. It localises to the cell cortex. Acts as a stomatal lineage scaffold which regulates subcellular localization and transient polarization of kinases (e.g. ASK7/BIN2 and ASK3/SK12) involved in asymmetric cell division (ACD) in a BASL-dependent manner. The polypeptide is Protein POLAR-like 1 (Arabidopsis thaliana (Mouse-ear cress)).